We begin with the raw amino-acid sequence, 146 residues long: MKLNELSPPKGARTARKRKGRGPGSGLGKTAGKGHKGQKARSGGGVRPGFEGGQMPVHRRLPKRGFCNIFAKKIAAVNVRDLARFEADSVVDAAALREARLISGKVDGVKILGHGEITQALTVKADQWSESAKEKIEKAGGKIEAA.

The disordered stretch occupies residues 1–58 (MKLNELSPPKGARTARKRKGRGPGSGLGKTAGKGHKGQKARSGGGVRPGFEGGQMPVH). Gly residues-rich tracts occupy residues 22–31 (GPGSGLGKTA) and 42–52 (SGGGVRPGFEG).

It belongs to the universal ribosomal protein uL15 family. In terms of assembly, part of the 50S ribosomal subunit.

In terms of biological role, binds to the 23S rRNA. This is Large ribosomal subunit protein uL15 from Desulfatibacillum aliphaticivorans.